Here is a 437-residue protein sequence, read N- to C-terminus: Probable glycine dehydrogenase (decarboxylating) subunit 1 (437 aa).

The protein belongs to the GcvP family. N-terminal subunit subfamily. In terms of assembly, the glycine cleavage system is composed of four proteins: P, T, L and H. In this organism, the P 'protein' is a heterodimer of two subunits.

The catalysed reaction is N(6)-[(R)-lipoyl]-L-lysyl-[glycine-cleavage complex H protein] + glycine + H(+) = N(6)-[(R)-S(8)-aminomethyldihydrolipoyl]-L-lysyl-[glycine-cleavage complex H protein] + CO2. Functionally, the glycine cleavage system catalyzes the degradation of glycine. The P protein binds the alpha-amino group of glycine through its pyridoxal phosphate cofactor; CO(2) is released and the remaining methylamine moiety is then transferred to the lipoamide cofactor of the H protein. The polypeptide is Probable glycine dehydrogenase (decarboxylating) subunit 1 (Thermotoga petrophila (strain ATCC BAA-488 / DSM 13995 / JCM 10881 / RKU-1)).